We begin with the raw amino-acid sequence, 1508 residues long: ABC-type transporter oblD (1508 aa).

Disordered regions lie at residues 1-35 and 54-82; these read MSLG…LTNN and KYTQ…PNGG. The segment covering 11–24 has biased composition (polar residues); sequence TPNSVMPSDASLHN. Residues Asn24 and Asn35 are each glycosylated (N-linked (GlcNAc...) asparagine). The span at 55 to 68 shows a compositional bias: polar residues; it reads YTQNSVYSTTSQNP. N-linked (GlcNAc...) asparagine glycosylation is found at Asn83, Asn231, and Asn314. The 255-residue stretch at 136-390 folds into the ABC transporter 1 domain; that stretch reads LEAVGLVRKL…FLNMGFVCPD (255 aa). 5 helical membrane-spanning segments follow: residues 501–521, 536–556, 610–630, 643–663, and 752–772; these read ITIS…SMFF, LLFF…LTLY, GNFF…SMFF, ALPF…FTIP, and GIIF…SDFI. The 243-residue stretch at 828-1070 folds into the ABC transporter 2 domain; that stretch reads FQWKDICYDI…ILIDYFTRNG (243 aa). An ATP-binding site is contributed by 864-871; the sequence is GVSGAGKT. 4 helical membrane passes run 1172 to 1192, 1206 to 1226, 1296 to 1316, and 1322 to 1342; these read YIYS…FSLY, FAIF…MPHF, LFVW…IAAL, and AGNM…ILTT. An N-linked (GlcNAc...) asparagine glycan is attached at Asn1390. A helical membrane pass occupies residues 1443–1463; the sequence is FGLMWVFVVFNAFAACGLYYW.

This sequence belongs to the ABC transporter superfamily. ABCG family. PDR (TC 3.A.1.205) subfamily.

It is found in the cell membrane. In terms of biological role, ABC-type transporter; part of the gene cluster that mediates the biosynthesis of the sesterterpenes ophiobolins, fungal phytotoxins with potential anti-cancer activities. Acts as a specific transporter involved in ophiobolins secretion. The sequence is that of ABC-type transporter oblD from Cochliobolus heterostrophus (strain C5 / ATCC 48332 / race O) (Southern corn leaf blight fungus).